Consider the following 367-residue polypeptide: UDP-N-acetylglucosamine--N-acetylmuramyl-(pentapeptide) pyrophosphoryl-undecaprenol N-acetylglucosamine transferase (367 aa).

UDP-N-acetyl-alpha-D-glucosamine is bound by residues 15-17 (TGG), Asn-127, Arg-163, Ser-191, Ile-249, and Gln-294.

The protein belongs to the glycosyltransferase 28 family. MurG subfamily.

Its subcellular location is the cell inner membrane. It catalyses the reaction di-trans,octa-cis-undecaprenyl diphospho-N-acetyl-alpha-D-muramoyl-L-alanyl-D-glutamyl-meso-2,6-diaminopimeloyl-D-alanyl-D-alanine + UDP-N-acetyl-alpha-D-glucosamine = di-trans,octa-cis-undecaprenyl diphospho-[N-acetyl-alpha-D-glucosaminyl-(1-&gt;4)]-N-acetyl-alpha-D-muramoyl-L-alanyl-D-glutamyl-meso-2,6-diaminopimeloyl-D-alanyl-D-alanine + UDP + H(+). It participates in cell wall biogenesis; peptidoglycan biosynthesis. Cell wall formation. Catalyzes the transfer of a GlcNAc subunit on undecaprenyl-pyrophosphoryl-MurNAc-pentapeptide (lipid intermediate I) to form undecaprenyl-pyrophosphoryl-MurNAc-(pentapeptide)GlcNAc (lipid intermediate II). This Burkholderia thailandensis (strain ATCC 700388 / DSM 13276 / CCUG 48851 / CIP 106301 / E264) protein is UDP-N-acetylglucosamine--N-acetylmuramyl-(pentapeptide) pyrophosphoryl-undecaprenol N-acetylglucosamine transferase.